Reading from the N-terminus, the 149-residue chain is Ribonuclease H (149 aa).

The region spanning 1–142 (MSDSVELFTD…ADQLANRGVD (142 aa)) is the RNase H type-1 domain. The Mg(2+) site is built by Asp-10, Glu-48, Asp-70, and Asp-134.

It belongs to the RNase H family. In terms of assembly, monomer. Mg(2+) is required as a cofactor.

The protein localises to the cytoplasm. It carries out the reaction Endonucleolytic cleavage to 5'-phosphomonoester.. Functionally, endonuclease that specifically degrades the RNA of RNA-DNA hybrids. The chain is Ribonuclease H from Pseudomonas savastanoi pv. phaseolicola (strain 1448A / Race 6) (Pseudomonas syringae pv. phaseolicola (strain 1448A / Race 6)).